The primary structure comprises 297 residues: 33 kDa chaperonin (297 aa).

Cystine bridges form between cysteine 239–cysteine 241 and cysteine 272–cysteine 275.

It belongs to the HSP33 family. In terms of processing, under oxidizing conditions two disulfide bonds are formed involving the reactive cysteines. Under reducing conditions zinc is bound to the reactive cysteines and the protein is inactive.

Its subcellular location is the cytoplasm. Redox regulated molecular chaperone. Protects both thermally unfolding and oxidatively damaged proteins from irreversible aggregation. Plays an important role in the bacterial defense system toward oxidative stress. The protein is 33 kDa chaperonin of Synechococcus elongatus (strain ATCC 33912 / PCC 7942 / FACHB-805) (Anacystis nidulans R2).